A 162-amino-acid chain; its full sequence is Peptidyl-prolyl cis-trans isomerase (162 aa).

The PPIase cyclophilin-type domain maps to 16 to 162 (KTAYATIKTN…IESVVFSPSL (147 aa)).

This sequence belongs to the cyclophilin-type PPIase family.

It carries out the reaction [protein]-peptidylproline (omega=180) = [protein]-peptidylproline (omega=0). Functionally, PPIases accelerate the folding of proteins. It catalyzes the cis-trans isomerization of proline imidic peptide bonds in oligopeptides. The sequence is that of Peptidyl-prolyl cis-trans isomerase (ppiA) from Helicobacter pylori (strain J99 / ATCC 700824) (Campylobacter pylori J99).